The chain runs to 473 residues: Glutamyl-tRNA reductase (473 aa).

Residues 49–52, serine 109, 114–116, and glutamine 120 each bind substrate; these read TCNR and EQQ. Residue cysteine 50 is the Nucleophile of the active site. 189-194 serves as a coordination point for NADP(+); sequence GAGSMG. Positions 445–473 are disordered; sequence SGLDAGSGPQGADGPSAGPTPSAPNPSAE.

It belongs to the glutamyl-tRNA reductase family. In terms of assembly, homodimer.

The catalysed reaction is (S)-4-amino-5-oxopentanoate + tRNA(Glu) + NADP(+) = L-glutamyl-tRNA(Glu) + NADPH + H(+). It functions in the pathway porphyrin-containing compound metabolism; protoporphyrin-IX biosynthesis; 5-aminolevulinate from L-glutamyl-tRNA(Glu): step 1/2. In terms of biological role, catalyzes the NADPH-dependent reduction of glutamyl-tRNA(Glu) to glutamate 1-semialdehyde (GSA). In Mycobacterium ulcerans (strain Agy99), this protein is Glutamyl-tRNA reductase.